The sequence spans 432 residues: Trigger factor (432 aa).

Residues 163–248 form the PPIase FKBP-type domain; the sequence is GDVVVLDFAA…VHAVKERRLP (86 aa).

The protein belongs to the FKBP-type PPIase family. Tig subfamily.

The protein localises to the cytoplasm. It carries out the reaction [protein]-peptidylproline (omega=180) = [protein]-peptidylproline (omega=0). Its function is as follows. Involved in protein export. Acts as a chaperone by maintaining the newly synthesized protein in an open conformation. Functions as a peptidyl-prolyl cis-trans isomerase. The sequence is that of Trigger factor from Nitratidesulfovibrio vulgaris (strain DSM 19637 / Miyazaki F) (Desulfovibrio vulgaris).